The primary structure comprises 105 residues: U2-lycotoxin-Ls1a (105 aa).

Residues 1–17 form the signal peptide; sequence MIKYVLISALLVVAVYS. Residues 18–41 constitute a propeptide that is removed on maturation; sequence FTIEDNEDALLEEAEDELDTEEER. Cystine bridges form between cysteine 51–cysteine 67, cysteine 58–cysteine 97, cysteine 60–cysteine 83, and cysteine 69–cysteine 81.

It belongs to the neurotoxin 04 (omega-agtx) family. 01 (type I omega-agtx) subfamily. As to expression, expressed by the venom gland.

It localises to the secreted. Functionally, insecticidal to house crickets. It induces an excitatory slow-onset impact that leads to irreversible spastic paralysis. It also modifies human voltage-gated potassium channel Kv1.5/KCNA5. Most likely, it binds to the voltage-sensing domain of the channel, suggesting it does not block the pore but prevents its opening at physiological membrane potentials. The recombinant peptide binds to the channel in an irreversible manner and slows down the hKv1.5 current activation kinetics. It is not toxic to mice, when intracranially injected (at 0.5 ug/g mouse). The chain is U2-lycotoxin-Ls1a from Lycosa singoriensis (Wolf spider).